Here is a 478-residue protein sequence, read N- to C-terminus: UDP-glycosyltransferase 90A1 (478 aa).

UDP-alpha-D-glucose is bound by residues Thr-289, Val-343–Gln-345, His-360–Glu-368, and Met-382–Gln-385.

The protein belongs to the UDP-glycosyltransferase family.

The polypeptide is UDP-glycosyltransferase 90A1 (UGT90A1) (Arabidopsis thaliana (Mouse-ear cress)).